The sequence spans 217 residues: Thiopurine S-methyltransferase (217 aa).

Residues Trp10, Leu45, Glu66, and Arg123 each coordinate S-adenosyl-L-methionine.

The protein belongs to the class I-like SAM-binding methyltransferase superfamily. TPMT family.

The protein localises to the cytoplasm. It catalyses the reaction S-adenosyl-L-methionine + a thiopurine = S-adenosyl-L-homocysteine + a thiopurine S-methylether.. This chain is Thiopurine S-methyltransferase, found in Pseudomonas fluorescens (strain Pf0-1).